A 502-amino-acid chain; its full sequence is 2,3-bisphosphoglycerate-independent phosphoglycerate mutase (502 aa).

Mn(2+) contacts are provided by aspartate 12 and serine 62. Serine 62 (phosphoserine intermediate) is an active-site residue. Substrate is bound by residues histidine 123, 152 to 153 (RD), arginine 183, arginine 189, 255 to 258 (RPDR), and lysine 329. Residues aspartate 394, histidine 398, aspartate 435, histidine 436, and histidine 453 each contribute to the Mn(2+) site.

Belongs to the BPG-independent phosphoglycerate mutase family. In terms of assembly, monomer. The cofactor is Mn(2+).

It catalyses the reaction (2R)-2-phosphoglycerate = (2R)-3-phosphoglycerate. It functions in the pathway carbohydrate degradation; glycolysis; pyruvate from D-glyceraldehyde 3-phosphate: step 3/5. Its function is as follows. Catalyzes the interconversion of 2-phosphoglycerate and 3-phosphoglycerate. This Malacoplasma penetrans (strain HF-2) (Mycoplasma penetrans) protein is 2,3-bisphosphoglycerate-independent phosphoglycerate mutase.